A 232-amino-acid chain; its full sequence is Platelet-activating factor acetylhydrolase IB subunit alpha1 (232 aa).

Serine 2 is modified (N-acetylserine). Serine 2 is subject to Phosphoserine. Catalysis depends on residues serine 47, aspartate 192, and histidine 195.

This sequence belongs to the 'GDSL' lipolytic enzyme family. Platelet-activating factor acetylhydrolase IB beta/gamma subunits subfamily. As to quaternary structure, forms a catalytic dimer which is either homodimer (alpha1/alpha1 homodimer) or heterodimer with PAFAH1B2 (alpha1/alpha2 heterodimer). Component of the cytosolic (PAF-AH (I)) heterotetrameric enzyme, which is composed of PAFAH1B1 (beta), PAFAH1B2 (alpha2) and PAFAH1B3 (alpha1) subunits. The catalytic activity of the enzyme resides in the alpha1 (PAFAH1B3) and alpha2 (PAFAH1B2) subunits, whereas the beta subunit (PAFAH1B1) has regulatory activity. Trimer formation is not essential for the catalytic activity. Interacts with VLDLR; this interaction may modulate the Reelin pathway.

Its subcellular location is the cytoplasm. It catalyses the reaction a 1-O-alkyl-2-acetyl-sn-glycero-3-phosphocholine + H2O = a 1-O-alkyl-sn-glycero-3-phosphocholine + acetate + H(+). It carries out the reaction 1-O-hexadecyl-2-acetyl-sn-glycero-3-phosphocholine + H2O = 1-O-hexadecyl-sn-glycero-3-phosphocholine + acetate + H(+). The enzyme catalyses 1-O-hexadecyl-2-acetyl-sn-glycero-3-phosphate + H2O = 1-O-hexadecyl-sn-glycero-3-phosphate + acetate + H(+). With respect to regulation, beta subunit (PAFAH1B1) inhibits the acetylhydrolase activity of the alpha1/alpha1 catalytic homodimer. Its function is as follows. Alpha1 catalytic subunit of the cytosolic type I platelet-activating factor (PAF) acetylhydrolase (PAF-AH (I)) heterotetrameric enzyme that catalyzes the hydrolyze of the acetyl group at the sn-2 position of PAF and its analogs and modulates the action of PAF. The activity and substrate specificity of PAF-AH (I) are affected by its subunit composition. Both alpha1/alpha1 homodimer (PAFAH1B3/PAFAH1B3 homodimer) and alpha1/alpha2 heterodimer(PAFAH1B3/PAFAH1B2 heterodimer) hydrolyze 1-O-alkyl-2-acetyl-sn-glycero-3-phosphoric acid (AAGPA) more efficiently than PAF, but they have little hydrolytic activity towards 1-O-alkyl-2-acetyl-sn-glycero-3-phosphorylethanolamine (AAGPE). Plays an important role during the development of brain. This is Platelet-activating factor acetylhydrolase IB subunit alpha1 from Bos taurus (Bovine).